The sequence spans 737 residues: Glycogen [starch] synthase, muscle (737 aa).

The residue at position 8 (serine 8) is a Phosphoserine; by AMPK and PKA. Serine 11 is modified (phosphoserine). Residue lysine 39 coordinates UDP. UDP-alpha-D-glucose-binding residues include histidine 205 and arginine 211. Alpha-D-glucose 6-phosphate-binding residues include histidine 291, glutamate 292, glutamine 294, histidine 297, and lysine 301. Arginine 331 serves as a coordination point for UDP. Arginine 331 serves as a coordination point for UDP-alpha-D-glucose. Serine 412 is modified (phosphoserine). Histidine 501 is a binding site for alpha-D-glucose 6-phosphate. UDP-alpha-D-glucose contacts are provided by glutamate 510, tryptophan 512, and glycine 513. Threonine 515 lines the UDP pocket. Arginine 582 and arginine 586 together coordinate alpha-D-glucose 6-phosphate. The tract at residues 634 to 737 is disordered; the sequence is YRYPRPASVP…PTSSLGEERN (104 aa). Serine 641 is subject to Phosphoserine; by DYRK2, GSK3-alpha, GSK3-beta and PASK. Phosphoserine; by GSK3-alpha and GSK3-beta is present on residues serine 645 and serine 649. The residue at position 652 (serine 652) is a Phosphoserine. At serine 653 the chain carries Phosphoserine; by GSK3-alpha and GSK3-beta. Serine 657 is subject to Phosphoserine; by CK2. The span at 658 to 681 shows a compositional bias: acidic residues; sequence EDEEDPRNGPLEEDGERYDEDEEA. Residues 682–695 show a composition bias toward basic and acidic residues; the sequence is AKDRRNIRAPEWPR. Serine 698 carries the phosphoserine modification. Residues 698–714 show a composition bias toward polar residues; it reads SCTSSTSGSKRNSVDTA. Position 700 is a phosphothreonine (threonine 700). The residue at position 710 (serine 710) is a Phosphoserine. Residues 715 to 737 show a composition bias toward low complexity; sequence TSSSLSTPSEPLSPTSSLGEERN. Phosphothreonine is present on threonine 721. Serine 727 and serine 731 each carry phosphoserine.

This sequence belongs to the glycosyltransferase 3 family. In terms of assembly, part of the GYS1-GYG1 complex, a heterooctamer composed of a tetramer of GYS1 and 2 dimers of GYG1, where each GYS1 protomer binds to one GYG1 subunit (via GYG1 C-terminus); the GYS1 tetramer may dissociate from GYG1 dimers to continue glycogen polymerization on its own. Post-translationally, phosphorylation at Ser-8 by AMPK inactivates the enzyme activity. Primed phosphorylation at Ser-657 (site 5) by CSNK2A1 and CSNK2A2 is required for inhibitory phosphorylation at Ser-641 (site 3a), Ser-645 (site 3b), Ser-649 (site 3c) and Ser-653 (site 4) by GSK3A an GSK3B. Phosphorylated at Ser-641 by PASK, leading to inactivation; phosphorylation by PASK is inhibited by glycogen. Phosphorylated at Ser-641 by DYRK2, leading to inactivation. Dephosphorylation at Ser-641 and Ser-645 by PP1 activates the enzyme.

It carries out the reaction [(1-&gt;4)-alpha-D-glucosyl](n) + UDP-alpha-D-glucose = [(1-&gt;4)-alpha-D-glucosyl](n+1) + UDP + H(+). Its pathway is glycan biosynthesis; glycogen biosynthesis. With respect to regulation, allosteric activation by glucose-6-phosphate. Phosphorylation reduces the activity towards UDP-glucose. When in the non-phosphorylated state, glycogen synthase does not require glucose-6-phosphate as an allosteric activator; when phosphorylated it does. Functionally, glycogen synthase participates in the glycogen biosynthetic process along with glycogenin and glycogen branching enzyme. Extends the primer composed of a few glucose units formed by glycogenin by adding new glucose units to it. In this context, glycogen synthase transfers the glycosyl residue from UDP-Glc to the non-reducing end of alpha-1,4-glucan. This Pongo abelii (Sumatran orangutan) protein is Glycogen [starch] synthase, muscle (GYS1).